Here is a 156-residue protein sequence, read N- to C-terminus: Small ribosomal subunit protein uS7 (156 aa).

It belongs to the universal ribosomal protein uS7 family. As to quaternary structure, part of the 30S ribosomal subunit. Contacts proteins S9 and S11.

One of the primary rRNA binding proteins, it binds directly to 16S rRNA where it nucleates assembly of the head domain of the 30S subunit. Is located at the subunit interface close to the decoding center, probably blocks exit of the E-site tRNA. The polypeptide is Small ribosomal subunit protein uS7 (Bartonella henselae (strain ATCC 49882 / DSM 28221 / CCUG 30454 / Houston 1) (Rochalimaea henselae)).